The following is a 235-amino-acid chain: Proteasome subunit beta type-1 (235 aa).

Positions 1–20 (MSRLGFEQFPDYQVPGMKHP) are excised as a propeptide.

It belongs to the peptidase T1B family. The 26S proteasome consists of a 20S proteasome core and two 19S regulatory subunits. The 20S proteasome core is composed of 28 subunits that are arranged in four stacked rings, resulting in a barrel-shaped structure. The two end rings are each formed by seven alpha subunits, and the two central rings are each formed by seven beta subunits. The catalytic chamber with the active sites is on the inside of the barrel.

Its subcellular location is the cytoplasm. The protein resides in the nucleus. In terms of biological role, non-catalytic component of the proteasome, a multicatalytic proteinase complex which is characterized by its ability to cleave peptides with Arg, Phe, Tyr, Leu, and Glu adjacent to the leaving group at neutral or slightly basic pH. The proteasome has an ATP-dependent proteolytic activity. The chain is Proteasome subunit beta type-1 (Prosbeta6) from Drosophila melanogaster (Fruit fly).